The primary structure comprises 90 residues: Small ribosomal subunit protein bS20 (90 aa).

The protein belongs to the bacterial ribosomal protein bS20 family.

Binds directly to 16S ribosomal RNA. This is Small ribosomal subunit protein bS20 from Desulfitobacterium hafniense (strain DSM 10664 / DCB-2).